We begin with the raw amino-acid sequence, 604 residues long: MFSSLMLVSLLVLTLPIMLSIFNTYKNSTFPHHVKNTISYAFITSLIPTMMFIHSGQETIISNWHWMTMQTLKLSLSFKLDYFSMIFVPVALFVTWSIMEFSLWYMHSDPYITRFFKYLLTFLITMMILVTANNLFQLFIGWEGVGIMSFLLIGWWYGRTDANTAALQAILYNRIGDIGFIMAMAWFLFNTNTWDLQQIFMLDPNLTNLPLLGLLLAATGKSAQFGLHPWLPSAMEGPTPVSALLHSSTMVVAGVFLLIRFHPLMENNKTIQSLTLCLGAITTLFTAICALTQNDIKKIIAFSTSSQLGLMIVTIGINQPYLAFLHICTHAFFKAMLFMCSGSIIHSLNDEQDIRKMGGLFNAMPFTTTSLIIGSLALTGIPFLTGFYSKDLIIETANTSYTNAWALLMTLIATSLTAVYSTRIIFFALLGQPRFLPLTSINENNPFLINSIKRLLIGSIFAGFFISNNIYPTTVPEMTMPTYMKLTALAVTILGFTLALELSLMTHNLKLEHSTNVFKFSNLLGYYPTIMHRLPPLANLSMSQKSASLLLDSIWLENILPKSISQFQMKTSILISTQKGQIKLYFLSFLITLTLSMLLFNLHE.

16 consecutive transmembrane segments (helical) span residues 2-22, 41-61, 85-105, 115-135, 138-158, 169-189, 209-231, 239-259, 271-291, 299-318, 323-345, 364-384, 411-431, 455-475, 486-506, and 582-602; these read FSSL…LSIF, AFIT…ETII, MIFV…SLWY, FFKY…ANNL, LFIG…WWYG, AILY…WFLF, LPLL…HPWL, TPVS…FLLI, IQSL…ICAL, IIAF…IGIN, AFLH…GSII, MPFT…IPFL, LIAT…ALLG, LLIG…PTTV, LTAL…SLMT, and IKLY…LFNL.

Belongs to the complex I subunit 5 family. Core subunit of respiratory chain NADH dehydrogenase (Complex I) which is composed of 45 different subunits.

It is found in the mitochondrion inner membrane. The enzyme catalyses a ubiquinone + NADH + 5 H(+)(in) = a ubiquinol + NAD(+) + 4 H(+)(out). Its function is as follows. Core subunit of the mitochondrial membrane respiratory chain NADH dehydrogenase (Complex I) which catalyzes electron transfer from NADH through the respiratory chain, using ubiquinone as an electron acceptor. Essential for the catalytic activity and assembly of complex I. The polypeptide is NADH-ubiquinone oxidoreductase chain 5 (MT-ND5) (Equus caballus (Horse)).